We begin with the raw amino-acid sequence, 290 residues long: Outer dense fiber protein 4 (290 aa).

Phosphoserine is present on S28. 4 helical membrane passes run 44-64 (AQVV…LMVF), 132-152 (ISFI…HLPY), 164-184 (LIGI…LLLF), and 201-221 (IGWS…CGIL). Residues 262–290 (ADILDPTQDDQKPLSSDNIALPPNPDTTD) are disordered.

The protein localises to the membrane. Functionally, component of the outer dense fibers (ODF) of spermatozoa which could be involved in sperm tail structure, sperm movement and general organization of cellular cytoskeleton. The chain is Outer dense fiber protein 4 (Odf4) from Rattus norvegicus (Rat).